The following is a 327-amino-acid chain: Cytochrome c oxidase subunit 2 (327 aa).

A signal peptide spans 1–23 (MEQIPASIWTLTAGVVVTLISFW). Transmembrane regions (helical) follow at residues 56–78 (LFLVVQGAIILFVIRYRRRAGEE) and 96–114 (AIPALIVIFLGIYSVDIFQ). Residues H221, C255, C259, and H263 each contribute to the Cu cation site.

It belongs to the cytochrome c oxidase subunit 2 family. It depends on Cu cation as a cofactor.

The protein resides in the cell membrane. The enzyme catalyses 4 Fe(II)-[cytochrome c] + O2 + 8 H(+)(in) = 4 Fe(III)-[cytochrome c] + 2 H2O + 4 H(+)(out). In terms of biological role, subunits I and II form the functional core of the enzyme complex. Electrons originating in cytochrome c are transferred via heme a and Cu(A) to the binuclear center formed by heme a3 and Cu(B). The chain is Cytochrome c oxidase subunit 2 (ctaC) from Thermostichus vulcanus (Synechococcus vulcanus).